The sequence spans 625 residues: 1-deoxy-D-xylulose-5-phosphate synthase 1 (625 aa).

Thiamine diphosphate contacts are provided by residues H74 and 115 to 117 (GHT). Residue D146 coordinates Mg(2+). Residues 147–148 (GS), N175, Y286, and E368 contribute to the thiamine diphosphate site. N175 is a Mg(2+) binding site.

It belongs to the transketolase family. DXPS subfamily. In terms of assembly, homodimer. It depends on Mg(2+) as a cofactor. Thiamine diphosphate is required as a cofactor.

It catalyses the reaction D-glyceraldehyde 3-phosphate + pyruvate + H(+) = 1-deoxy-D-xylulose 5-phosphate + CO2. It participates in metabolic intermediate biosynthesis; 1-deoxy-D-xylulose 5-phosphate biosynthesis; 1-deoxy-D-xylulose 5-phosphate from D-glyceraldehyde 3-phosphate and pyruvate: step 1/1. Its function is as follows. Catalyzes the acyloin condensation reaction between C atoms 2 and 3 of pyruvate and glyceraldehyde 3-phosphate to yield 1-deoxy-D-xylulose-5-phosphate (DXP). This Geobacter metallireducens (strain ATCC 53774 / DSM 7210 / GS-15) protein is 1-deoxy-D-xylulose-5-phosphate synthase 1.